Here is a 375-residue protein sequence, read N- to C-terminus: Probable aspartate aminotransferase (375 aa).

L-aspartate contacts are provided by glycine 31 and asparagine 165. The residue at position 223 (lysine 223) is an N6-(pyridoxal phosphate)lysine. Arginine 353 contributes to the L-aspartate binding site.

It belongs to the class-I pyridoxal-phosphate-dependent aminotransferase family. In terms of assembly, homodimer. Pyridoxal 5'-phosphate serves as cofactor.

It is found in the cytoplasm. It carries out the reaction L-aspartate + 2-oxoglutarate = oxaloacetate + L-glutamate. In Methanocaldococcus jannaschii (strain ATCC 43067 / DSM 2661 / JAL-1 / JCM 10045 / NBRC 100440) (Methanococcus jannaschii), this protein is Probable aspartate aminotransferase.